The following is a 309-amino-acid chain: ESX-3 secretion system protein EccE3 (309 aa).

2 consecutive transmembrane segments (helical) span residues 5-25 (IALA…QTTT) and 29-49 (VLGV…GMFL).

This sequence belongs to the EccE family. As to quaternary structure, part of the ESX-3 / type VII secretion system (T7SS), which is composed of cytosolic and membrane components. The ESX-3 membrane complex is composed of EccB3, EccC3, EccD3 and EccE3.

Its subcellular location is the cell inner membrane. In terms of biological role, part of the ESX-3 specialized secretion system, which is required for siderophore-mediated iron acquisition and for the secretion of EsxH and EsxG. The protein is ESX-3 secretion system protein EccE3 of Mycolicibacterium smegmatis (strain ATCC 700084 / mc(2)155) (Mycobacterium smegmatis).